We begin with the raw amino-acid sequence, 101 residues long: Histone H1-like protein EM6 (101 aa).

Composition is skewed to basic residues over residues Ala-1 to Lys-35 and Ala-58 to Arg-101. Positions Ala-1 to Arg-101 are disordered. A run of 4 repeats spans residues Lys-3–Arg-4, Ser-5–Arg-6, Ser-7–Arg-8, and Lys-9–Arg-10. The 10 X 2 AA approximate tandem repeats of [SK]-R stretch occupies residues Lys-3 to Arg-22. The 5; approximate repeat unit spans residues Ser-11–Ala-12. 5 consecutive repeat copies span residues Ser-13–Arg-14, Lys-15–Arg-16, Ser-17–Arg-18, Ser-19–Arg-20, and Lys-21–Arg-22. A globular region spans residues His-32 to Arg-65.

As to expression, sperm.

The protein resides in the nucleus. It localises to the chromosome. The chain is Histone H1-like protein EM6 from Ensis minor (Razor shell).